The chain runs to 503 residues: Maturase K (503 aa).

Belongs to the intron maturase 2 family. MatK subfamily.

The protein localises to the plastid. The protein resides in the chloroplast. Functionally, usually encoded in the trnK tRNA gene intron. Probably assists in splicing its own and other chloroplast group II introns. In Panax quinquefolius (American ginseng), this protein is Maturase K.